We begin with the raw amino-acid sequence, 90 residues long: Bombyxin B-7 (90 aa).

The signal sequence occupies residues 1–20 (MMKTSVMLMLVVVISLMCSG). Intrachain disulfides connect C30/C76, C42/C89, and C75/C80. The propeptide at 49–67 (GGAQYAPYFWTRQYLGSRG) is c peptide like.

It belongs to the insulin family. Heterodimer of a B chain and an A chain linked by two disulfide bonds.

It localises to the secreted. Brain peptide responsible for activation of prothoracic glands to produce ecdysone in insects. This is Bombyxin B-7 (BBXB7) from Bombyx mori (Silk moth).